We begin with the raw amino-acid sequence, 195 residues long: Ureidoglycolate lyase (195 aa).

The protein belongs to the ureidoglycolate lyase family. In terms of assembly, homodimer.

The catalysed reaction is (S)-ureidoglycolate = urea + glyoxylate. Its pathway is nitrogen metabolism; (S)-allantoin degradation. Its function is as follows. Catalyzes the catabolism of the allantoin degradation intermediate (S)-ureidoglycolate, generating urea and glyoxylate. Involved in the utilization of allantoin as secondary nitrogen source when primary sources are limiting. The polypeptide is Ureidoglycolate lyase (DAL3) (Saccharomyces cerevisiae (strain ATCC 204508 / S288c) (Baker's yeast)).